A 213-amino-acid polypeptide reads, in one-letter code: Cell wall protein PGA62 (213 aa).

Residues Met-1–Ala-18 form the signal peptide. Asn-22 is a glycosylation site (N-linked (GlcNAc...) asparagine). A disordered region spans residues Cys-120 to Gly-194. The segment covering Pro-145–Lys-172 has biased composition (polar residues). The span at Thr-173 to Gly-194 shows a compositional bias: low complexity. Gly-194 carries GPI-anchor amidated glycine lipidation. The propeptide at Ala-195 to Phe-213 is removed in mature form.

The protein belongs to the HWP1 family. N- and O-glycosylated. In terms of processing, the GPI-anchor is attached to the protein in the endoplasmic reticulum and serves to target the protein to the cell surface. There, the glucosamine-inositol phospholipid moiety is cleaved off and the GPI-modified mannoprotein is covalently attached via its lipidless GPI glycan remnant to the 1,6-beta-glucan of the outer cell wall layer.

The protein resides in the secreted. It localises to the cell wall. The protein localises to the membrane. Its function is as follows. Cell wall protein necessary for cell wall integrity. Plays only a minor role in hyphal morphogenesis and is not critical to biofilm formation. In Candida albicans (strain SC5314 / ATCC MYA-2876) (Yeast), this protein is Cell wall protein PGA62 (PGA62).